A 678-amino-acid chain; its full sequence is Platelet endothelial cell adhesion molecule (678 aa).

Residues 1 to 17 (MLLALLLTMLLYASLQA) form the signal peptide. The Extracellular portion of the chain corresponds to 18 to 589 (QENSFTINSI…VRVFLAPWKK (572 aa)). Ig-like C2-type domains lie at 40 to 126 (GQKL…PEVT), 135 to 213 (GGIV…FIRS), 225 to 309 (PKFQ…ILVN), 315 to 391 (PRPK…LVPV), 413 to 472 (GQII…NCHS), and 488 to 577 (PVDE…RSGP). C47 and C99 are disulfide-bonded. N-linked (GlcNAc...) asparagine glycosylation is found at N74 and N141. Cystine bridges form between C142–C195 and C245–C293. N-linked (GlcNAc...) asparagine glycans are attached at residues N309, N345, N360, N424, and N540. 3 cysteine pairs are disulfide-bonded: C336-C375, C420-C465, and C512-C561. Residues 590–610 (GLIAVVVIGVVIAALIVAAKY) traverse the membrane as a helical segment. Over 611–678 (YFLRKAKAKQ…EPHQENGRLP (68 aa)) the chain is Cytoplasmic. Residues 634–653 (NSNSEKVSEPSVETNSHYDS) form a disordered region. An ITIM motif motif is present at residues 658–663 (VEYTEV). A Phosphotyrosine; by FER modification is found at Y660.

Trans-homodimer (via Ig-like C2-type 1 and Ig-like C2-type 2 domains); trans-homodimerization is required for cell-cell interaction. Forms a complex with BDKRB2 and GNAQ. Interacts with BDKRB2 and GNAQ. Interacts with PTPN11. Interacts with FER. Interacts with CD177; the interaction is Ca(2+)-dependent; the interaction is direct. Phosphorylated on Ser and Tyr residues after cellular activation. In endothelial cells Fyn mediates mechanical-force (stretch or pull) induced tyrosine phosphorylation. Phosphorylated on tyrosine residues by FER and FES in response to FCER1 activation. Post-translationally, palmitoylation by ZDHHC21 is necessary for cell surface expression in endothelial cells and enrichment in membrane rafts.

It localises to the cell membrane. The protein localises to the membrane raft. Its subcellular location is the cell junction. Its function is as follows. Cell adhesion molecule which is required for leukocyte transendothelial migration (TEM) under most inflammatory conditions. Tyr-660 plays a critical role in TEM and is required for efficient trafficking of PECAM1 to and from the lateral border recycling compartment (LBRC) and is also essential for the LBRC membrane to be targeted around migrating leukocytes. Trans-homophilic interaction may play a role in endothelial cell-cell adhesion via cell junctions. Heterophilic interaction with CD177 plays a role in transendothelial migration of neutrophils. Homophilic ligation of PECAM1 prevents macrophage-mediated phagocytosis of neighboring viable leukocytes by transmitting a detachment signal. Promotes macrophage-mediated phagocytosis of apoptotic leukocytes by tethering them to the phagocytic cells; PECAM1-mediated detachment signal appears to be disabled in apoptotic leukocytes. Modulates bradykinin receptor BDKRB2 activation. Regulates bradykinin- and hyperosmotic shock-induced ERK1/2 activation in endothelial cells. Induces susceptibility to atherosclerosis. This Rattus norvegicus (Rat) protein is Platelet endothelial cell adhesion molecule (Pecam1).